The chain runs to 345 residues: Biotin synthase (345 aa).

The Radical SAM core domain maps to Y67–R295. C82, C86, and C89 together coordinate [4Fe-4S] cluster. Residues C126, C158, C218, and R290 each coordinate [2Fe-2S] cluster.

This sequence belongs to the radical SAM superfamily. Biotin synthase family. Homodimer. The cofactor is [4Fe-4S] cluster. It depends on [2Fe-2S] cluster as a cofactor.

The enzyme catalyses (4R,5S)-dethiobiotin + (sulfur carrier)-SH + 2 reduced [2Fe-2S]-[ferredoxin] + 2 S-adenosyl-L-methionine = (sulfur carrier)-H + biotin + 2 5'-deoxyadenosine + 2 L-methionine + 2 oxidized [2Fe-2S]-[ferredoxin]. The protein operates within cofactor biosynthesis; biotin biosynthesis; biotin from 7,8-diaminononanoate: step 2/2. In terms of biological role, catalyzes the conversion of dethiobiotin (DTB) to biotin by the insertion of a sulfur atom into dethiobiotin via a radical-based mechanism. This Prochlorococcus marinus (strain NATL1A) protein is Biotin synthase.